Consider the following 284-residue polypeptide: RNase adapter protein RapZ (284 aa).

An ATP-binding site is contributed by 8–15; that stretch reads GRSGSGKS. GTP is bound at residue 56-59; that stretch reads DVRN. The RNA-binding stretch occupies residues 266–284; sequence RSRGKNVQSRHRTLEKRKT.

The protein belongs to the RapZ-like family. RapZ subfamily. Homotrimer.

Functionally, modulates the synthesis of GlmS, by affecting the processing and stability of the regulatory small RNA GlmZ. When glucosamine-6-phosphate (GlcN6P) concentrations are high in the cell, RapZ binds GlmZ and targets it to cleavage by RNase E. Consequently, GlmZ is inactivated and unable to activate GlmS synthesis. Under low GlcN6P concentrations, RapZ is sequestered and inactivated by an other regulatory small RNA, GlmY, preventing GlmZ degradation and leading to synthesis of GlmS. The sequence is that of RNase adapter protein RapZ from Salmonella typhimurium (strain LT2 / SGSC1412 / ATCC 700720).